Reading from the N-terminus, the 1704-residue chain is Arf-GAP with Rho-GAP domain, ANK repeat and PH domain-containing protein 2 (1704 aa).

One can recognise an SAM domain in the interval 6 to 70; that stretch reads EVNVDIKDFL…LKQLQIILSK (65 aa). At Tyr-77 the chain carries Phosphotyrosine. Positions 126 to 161 are disordered; sequence NLEDSDASVERSQYPQSDDKLSPPKRDFPTAEEPHL. Basic and acidic residues predominate over residues 142–160; it reads SDDKLSPPKRDFPTAEEPH. 2 consecutive PH domains span residues 482–574 and 587–679; these read KKVK…NALK and TPEK…QSIA. The Arf-GAP domain maps to 676 to 811; sequence QSIAETLSDY…TLLASLTKEE (136 aa). The segment at 700–723 adopts a C4-type zinc-finger fold; sequence CADCKAPDPDWASINLCVVICKKC. PH domains lie at 878 to 1003 and 1014 to 1114; these read DIHS…KHFV and DYDL…AGTD. The region spanning 1116–1297 is the Rho-GAP domain; the sequence is NALQDQQLSK…DLINNYVEIF (182 aa). The 95-residue stretch at 1326–1420 folds into the Ras-associating domain; sequence GDLLIEVYVE…AYLVVKRFLT (95 aa). The PH 5 domain occupies 1434-1537; sequence GSIKEGILKI…WMTSIFIAQH (104 aa). The residue at position 1632 (Ser-1632) is a Phosphoserine. A disordered region spans residues 1636–1675; that stretch reads LEDTEPEAPLGQPKGHKGLKTLRKTEDRNSKATLDSDHKL. A compositionally biased stretch (basic and acidic residues) spans 1658–1675; sequence RKTEDRNSKATLDSDHKL.

In terms of tissue distribution, detected in brain, thymus, lymph node, thyroid, spinal cord, trachea, heart, skeletal muscle, spleen, kidney, liver, placenta, lung and peripheral blood leukocytes.

The protein resides in the cytoplasm. In terms of biological role, phosphatidylinositol 3,4,5-trisphosphate-dependent GTPase-activating protein that modulates actin cytoskeleton remodeling by regulating ARF and RHO family members. Is activated by phosphatidylinositol 3,4,5-trisphosphate (PtdIns(3,4,5)P3) binding. Can be activated by phosphatidylinositol 3,4-bisphosphate (PtdIns(3,4,5)P2) binding, albeit with lower efficiency. In Homo sapiens (Human), this protein is Arf-GAP with Rho-GAP domain, ANK repeat and PH domain-containing protein 2 (ARAP2).